The sequence spans 746 residues: F-box only protein 30 (746 aa).

Residues 49–110 (EHRLLCPFER…SYSDRKSYES (62 aa)) form a TRAF-type zinc finger. Disordered regions lie at residues 222 to 241 (MDEENNKESFQDKNLKDQDH) and 247 to 266 (IGAVGGVDYSGTSQNAQAEQ). The span at 225–241 (ENNKESFQDKNLKDQDH) shows a compositional bias: basic and acidic residues. Over residues 256–266 (SGTSQNAQAEQ) the composition is skewed to polar residues. Ser-383 is modified (phosphoserine). The F-box domain occupies 611 to 659 (SDHLSSLPFEVLQHIAGFLDGFSLCQLACVSRLMRDVCGSLLQSRGMVI).

As to quaternary structure, part of a SCF (SKP1-cullin-F-box) protein ligase complex. Interacts with SKP1, CUL1 and RBX1/ROC1. In terms of processing, auto-ubiquitinated. Post-translationally, may be neddylated. Neddylation may be required for E3 ligase activity, since it was observed only after purification with o-phenanthroline.

Its pathway is protein modification; protein ubiquitination. Substrate-recognition component of the SCF (SKP1-CUL1-F-box protein)-type E3 ubiquitin ligase complex. Required for muscle atrophy following denervation. The polypeptide is F-box only protein 30 (Fbxo30) (Mus musculus (Mouse)).